Consider the following 210-residue polypeptide: Large ribosomal subunit protein uL4 (210 aa).

Polar residues predominate over residues 41–51; it reads ANARQGTQSTK. Disordered stretches follow at residues 41 to 60 and 67 to 98; these read ANARQGTQSTKTRGEVQGSS and KGTGNARMGTNRSPVRRHGGVAFGPRPRDFSK.

Belongs to the universal ribosomal protein uL4 family. As to quaternary structure, part of the 50S ribosomal subunit.

Functionally, one of the primary rRNA binding proteins, this protein initially binds near the 5'-end of the 23S rRNA. It is important during the early stages of 50S assembly. It makes multiple contacts with different domains of the 23S rRNA in the assembled 50S subunit and ribosome. Forms part of the polypeptide exit tunnel. The protein is Large ribosomal subunit protein uL4 of Dehalococcoides mccartyi (strain ATCC BAA-2100 / JCM 16839 / KCTC 5957 / BAV1).